Here is a 275-residue protein sequence, read N- to C-terminus: Ribosomal RNA small subunit methyltransferase A (275 aa).

6 residues coordinate S-adenosyl-L-methionine: asparagine 19, leucine 21, glycine 46, glutamate 71, aspartate 94, and asparagine 117.

The protein belongs to the class I-like SAM-binding methyltransferase superfamily. rRNA adenine N(6)-methyltransferase family. RsmA subfamily.

Its subcellular location is the cytoplasm. It catalyses the reaction adenosine(1518)/adenosine(1519) in 16S rRNA + 4 S-adenosyl-L-methionine = N(6)-dimethyladenosine(1518)/N(6)-dimethyladenosine(1519) in 16S rRNA + 4 S-adenosyl-L-homocysteine + 4 H(+). Its function is as follows. Specifically dimethylates two adjacent adenosines (A1518 and A1519) in the loop of a conserved hairpin near the 3'-end of 16S rRNA in the 30S particle. May play a critical role in biogenesis of 30S subunits. The polypeptide is Ribosomal RNA small subunit methyltransferase A (Burkholderia pseudomallei (strain 668)).